The chain runs to 387 residues: Phosphoglycerate kinase (387 aa).

Residues 21–23, arginine 36, 59–62, arginine 113, and arginine 146 each bind substrate; these read DLN and HLGR. ATP contacts are provided by residues lysine 197, glutamate 314, and 340-343; that span reads GGDT.

This sequence belongs to the phosphoglycerate kinase family. As to quaternary structure, monomer.

The protein localises to the cytoplasm. The enzyme catalyses (2R)-3-phosphoglycerate + ATP = (2R)-3-phospho-glyceroyl phosphate + ADP. Its pathway is carbohydrate degradation; glycolysis; pyruvate from D-glyceraldehyde 3-phosphate: step 2/5. In Vibrio cholerae serotype O1 (strain ATCC 39541 / Classical Ogawa 395 / O395), this protein is Phosphoglycerate kinase (pgk).